The primary structure comprises 127 residues: Large ribosomal subunit protein uL22 (127 aa).

Belongs to the universal ribosomal protein uL22 family. In terms of assembly, part of the 50S ribosomal subunit.

Functionally, this protein binds specifically to 23S rRNA; its binding is stimulated by other ribosomal proteins, e.g. L4, L17, and L20. It is important during the early stages of 50S assembly. It makes multiple contacts with different domains of the 23S rRNA in the assembled 50S subunit and ribosome. Its function is as follows. The globular domain of the protein is located near the polypeptide exit tunnel on the outside of the subunit, while an extended beta-hairpin is found that lines the wall of the exit tunnel in the center of the 70S ribosome. The chain is Large ribosomal subunit protein uL22 from Methylobacterium sp. (strain 4-46).